Consider the following 1169-residue polypeptide: Topoisomerase 1-associated factor 1 (1169 aa).

Disordered stretches follow at residues 573–600 (RRKAKDVEGTGNDENDEENGSEDEDRLE) and 900–1150 (YGGG…DAPI). Composition is skewed to acidic residues over residues 583–599 (GNDENDEENGSEDEDRL) and 917–928 (FGDDSEGEDEVP). Pro residues predominate over residues 931 to 940 (PLFPPNPRAA). Residues 958–972 (PDDEDEDDSVDEETL) show a composition bias toward acidic residues. 2 stretches are compositionally biased toward basic and acidic residues: residues 973–1000 (EERRRARLENSRARLAKIKSDLYVHASD) and 1009–1024 (KEFFLLEEQRRREQAK). A compositionally biased stretch (acidic residues) spans 1100–1112 (GEEDDGFNFDDDL). Over residues 1113-1140 (VFSRDREKLLGSAGNEEKDSNRPDKAMA) the composition is skewed to basic and acidic residues.

It belongs to the timeless family.

It localises to the nucleus. Functionally, involved in chromosome segregation during meiosis and DNA damage repair. This is Topoisomerase 1-associated factor 1 (tof1) from Aspergillus niger (strain ATCC MYA-4892 / CBS 513.88 / FGSC A1513).